The following is a 142-amino-acid chain: Immunoglobulin iota chain (142 aa).

An N-terminal signal peptide occupies residues 1 to 19; it reads MAWTSVLLMLLAYLTGCGP. Positions 20–41 are framework-1; that stretch reads QPMVHQPPLASSSLGATIRLSC. Residues Cys41 and Cys115 are joined by a disulfide bond. Positions 42-56 are complementarity-determining-1; the sequence is TLSNDHNIGIYSIYW. Residues 57 to 70 form a framework-2 region; that stretch reads YQQRPGHPPRFLLR. The tract at residues 71–81 is complementarity-determining-2; it reads YFSHSDKHQGP. Positions 82-115 are framework-3; that stretch reads DIPPRFSGSKDTTRNLGYLSISELQPEDEAVYYC.

This sequence belongs to the immunoglobulin superfamily. In terms of assembly, interacts with IGLL1. Interacts with SYNV1/HRD1 (via N-terminus); this interaction leads to increased VPREB1A ubiquitination and degradation in pre-B cells, possibly through a lysosomal, not proteasomal, pathway. In terms of tissue distribution, only expressed by pre-B-cells.

Its subcellular location is the endoplasmic reticulum. Functionally, associates with the Ig-mu chain to form a molecular complex that is expressed on the surface of pre-B-cells. This complex presumably regulates Ig gene rearrangements in the early steps of B-cell differentiation. This chain is Immunoglobulin iota chain, found in Mus musculus (Mouse).